A 352-amino-acid polypeptide reads, in one-letter code: Probable transcription factor At1g11510 (352 aa).

Disordered regions lie at residues 1–132 and 239–269; these read MSRR…GGEE and MKSN…KNNC. Acidic residues predominate over residues 56 to 66; sequence SGSDEETDSDS. 3 stretches are compositionally biased toward basic and acidic residues: residues 89-101, 117-132, and 241-259; these read KTSE…RSLE, VSGE…GGEE, and SNEK…HELD.

The protein belongs to the GeBP family.

The sequence is that of Probable transcription factor At1g11510 from Arabidopsis thaliana (Mouse-ear cress).